A 252-amino-acid polypeptide reads, in one-letter code: Imidazole glycerol phosphate synthase subunit HisF (252 aa).

Active-site residues include aspartate 12 and aspartate 131.

This sequence belongs to the HisA/HisF family. As to quaternary structure, heterodimer of HisH and HisF.

The protein localises to the cytoplasm. It catalyses the reaction 5-[(5-phospho-1-deoxy-D-ribulos-1-ylimino)methylamino]-1-(5-phospho-beta-D-ribosyl)imidazole-4-carboxamide + L-glutamine = D-erythro-1-(imidazol-4-yl)glycerol 3-phosphate + 5-amino-1-(5-phospho-beta-D-ribosyl)imidazole-4-carboxamide + L-glutamate + H(+). The protein operates within amino-acid biosynthesis; L-histidine biosynthesis; L-histidine from 5-phospho-alpha-D-ribose 1-diphosphate: step 5/9. In terms of biological role, IGPS catalyzes the conversion of PRFAR and glutamine to IGP, AICAR and glutamate. The HisF subunit catalyzes the cyclization activity that produces IGP and AICAR from PRFAR using the ammonia provided by the HisH subunit. The sequence is that of Imidazole glycerol phosphate synthase subunit HisF from Thermus thermophilus (strain ATCC BAA-163 / DSM 7039 / HB27).